A 481-amino-acid chain; its full sequence is Vanillin dehydrogenase (481 aa).

An NAD(+)-binding site is contributed by 228-233 (GSTHVG). Residues glutamate 250 and cysteine 284 contribute to the active site.

This sequence belongs to the aldehyde dehydrogenase family.

It catalyses the reaction vanillin + NAD(+) + H2O = vanillate + NADH + 2 H(+). Catalyzes the NAD-dependent oxidation of vanillin to vanillic acid. The sequence is that of Vanillin dehydrogenase (vdh) from Pseudomonas sp. (strain HR199 / DSM 7063).